The sequence spans 308 residues: tRNA pseudouridine synthase B (308 aa).

Aspartate 47 acts as the Nucleophile in catalysis.

It belongs to the pseudouridine synthase TruB family. Type 1 subfamily.

It catalyses the reaction uridine(55) in tRNA = pseudouridine(55) in tRNA. Its function is as follows. Responsible for synthesis of pseudouridine from uracil-55 in the psi GC loop of transfer RNAs. In Xanthomonas axonopodis pv. citri (strain 306), this protein is tRNA pseudouridine synthase B.